The chain runs to 583 residues: Ribosomal lysine N-methyltransferase 1 (583 aa).

Residues 22–274 enclose the SET domain; that stretch reads EELKFLYTDL…QSRELSNNYG (253 aa). Tyr-273 serves as a coordination point for S-adenosyl-L-methionine. Coiled coils occupy residues 378-407 and 433-459; these read KAEE…KLNS and KGQK…ENKH.

This sequence belongs to the class V-like SAM-binding methyltransferase superfamily. RKM1 family.

It localises to the cytoplasm. The protein localises to the nucleus. Its function is as follows. S-adenosyl-L-methionine-dependent protein-lysine N-methyltransferase that monomethylates ribosomal protein S18 (RPS18A and RPS18B) at 'Lys-48' and dimethylates ribosomal protein L23 (RPL23A and RPL23B) at 'Lys-106' and 'Lys-110'. The sequence is that of Ribosomal lysine N-methyltransferase 1 from Saccharomyces cerevisiae (strain ATCC 204508 / S288c) (Baker's yeast).